The following is a 93-amino-acid chain: Sec-independent protein translocase protein TatA (93 aa).

The helical transmembrane segment at 1 to 21 (MGIFDWKHWIVILVVVVLVFG) threads the bilayer. The disordered stretch occupies residues 43–93 (MNDDEKPAEPVVPPAAQPVPPVQPQQSAPLNQPHTIDVQAQKVEEPTRKDS). Positions 52–65 (PVVPPAAQPVPPVQ) are enriched in pro residues. Residues 84 to 93 (KVEEPTRKDS) are compositionally biased toward basic and acidic residues.

Belongs to the TatA/E family. The Tat system comprises two distinct complexes: a TatABC complex, containing multiple copies of TatA, TatB and TatC subunits, and a separate TatA complex, containing only TatA subunits. Substrates initially bind to the TatABC complex, which probably triggers association of the separate TatA complex to form the active translocon.

The protein localises to the cell inner membrane. Its function is as follows. Part of the twin-arginine translocation (Tat) system that transports large folded proteins containing a characteristic twin-arginine motif in their signal peptide across membranes. TatA could form the protein-conducting channel of the Tat system. The chain is Sec-independent protein translocase protein TatA from Pseudomonas fluorescens (strain ATCC BAA-477 / NRRL B-23932 / Pf-5).